The chain runs to 415 residues: Light-independent protochlorophyllide reductase subunit N (415 aa).

Positions 16, 41, and 98 each coordinate [4Fe-4S] cluster.

This sequence belongs to the BchN/ChlN family. As to quaternary structure, protochlorophyllide reductase is composed of three subunits; BchL, BchN and BchB. Forms a heterotetramer of two BchB and two BchN subunits. It depends on [4Fe-4S] cluster as a cofactor.

It carries out the reaction chlorophyllide a + oxidized 2[4Fe-4S]-[ferredoxin] + 2 ADP + 2 phosphate = protochlorophyllide a + reduced 2[4Fe-4S]-[ferredoxin] + 2 ATP + 2 H2O. Its pathway is porphyrin-containing compound metabolism; bacteriochlorophyll biosynthesis (light-independent). In terms of biological role, component of the dark-operative protochlorophyllide reductase (DPOR) that uses Mg-ATP and reduced ferredoxin to reduce ring D of protochlorophyllide (Pchlide) to form chlorophyllide a (Chlide). This reaction is light-independent. The NB-protein (BchN-BchB) is the catalytic component of the complex. The protein is Light-independent protochlorophyllide reductase subunit N of Roseiflexus sp. (strain RS-1).